Reading from the N-terminus, the 520-residue chain is MKIGPVLGIEGTAWNLSAALFDDDLIKLVSHPYKPVQGGIHPREAAQHHASVITSVIEEVLKGNPTPVAVAFSQGPGLGPCLRIVGTAARALALSFDVPLIGVNHCVAHVEIGRFASGFDDPVVLYASGANTQVLGYLQGRYRIFGETLDIGIGNAIDKFARSKGLPHPGGPEIERIAKNGSYIPLPYTVKGMDLAFSGLVSAAKDASAPLEDVCYSLQETAFAMCTEVTERALSQTGKEQLILVGGVGMNKRLQEMLSCMCEDRDAAFSVPNPQYLGDNGAMIAYTGRVMLESGSVLPVEESRVNPSYRADQVLVTWREEPSGSERHPDAYSARGAEAIVRFCDGAASKIRVSKRYRHPELDRRLIAERTRAEARLIAEARKAGVRTPIIREITQDTIIMEHIDGVKLKECLSPELLEETGRMVGKLHAAQIVHGDLTTCNFLVHDGKTWLIDFGLAGTSSDIEHRGVDIHVLFQVLESTSKDSDILKEAFIQGYREKMPLADEILNREHEIELRGRYL.

The interval 1 to 318 is kae1; the sequence is MKIGPVLGIE…YRADQVLVTW (318 aa). Positions 105, 109, and 126 each coordinate Fe cation. Residues 126–130, Asp158, Gly171, Glu175, and Asn251 contribute to the L-threonylcarbamoyladenylate site; that span reads YASGA. Asp279 serves as a coordination point for Fe cation. Residues 327-520 form the Protein kinase domain; that stretch reads RHPDAYSARG…HEIELRGRYL (194 aa). Residues 333–341 and Lys350 contribute to the ATP site; that span reads SARGAEAIV. The Proton acceptor; for kinase activity role is filled by Asp437.

In the N-terminal section; belongs to the KAE1 / TsaD family. This sequence in the C-terminal section; belongs to the protein kinase superfamily. Tyr protein kinase family. BUD32 subfamily. In terms of assembly, component of the KEOPS complex that consists of Kae1, Bud32, Cgi121 and Pcc1; the whole complex dimerizes. Requires Fe(2+) as cofactor.

The protein resides in the cytoplasm. The catalysed reaction is L-seryl-[protein] + ATP = O-phospho-L-seryl-[protein] + ADP + H(+). It catalyses the reaction L-threonyl-[protein] + ATP = O-phospho-L-threonyl-[protein] + ADP + H(+). The enzyme catalyses L-threonylcarbamoyladenylate + adenosine(37) in tRNA = N(6)-L-threonylcarbamoyladenosine(37) in tRNA + AMP + H(+). Its function is as follows. Required for the formation of a threonylcarbamoyl group on adenosine at position 37 (t(6)A37) in tRNAs that read codons beginning with adenine. Is a component of the KEOPS complex that is probably involved in the transfer of the threonylcarbamoyl moiety of threonylcarbamoyl-AMP (TC-AMP) to the N6 group of A37. The Kae1 domain likely plays a direct catalytic role in this reaction. The Bud32 domain probably displays kinase activity that regulates Kae1 function. The sequence is that of Probable bifunctional tRNA threonylcarbamoyladenosine biosynthesis protein from Methanospirillum hungatei JF-1 (strain ATCC 27890 / DSM 864 / NBRC 100397 / JF-1).